A 337-amino-acid chain; its full sequence is DnaJ homolog dnj-2 (337 aa).

A helical membrane pass occupies residues alanine 4 to valine 24. In terms of domain architecture, J spans asparagine 36 to leucine 105. Transmembrane regions (helical) follow at residues valine 127–serine 147 and leucine 222–leucine 242. Residues leucine 293 to arginine 323 are a coiled coil.

The protein belongs to the DNAJC25 family.

The protein localises to the membrane. In Caenorhabditis elegans, this protein is DnaJ homolog dnj-2 (dnj-2).